Here is a 754-residue protein sequence, read N- to C-terminus: Phosphatase and actin regulator 4B (754 aa).

Residues methionine 1 to histidine 12 show a composition bias toward basic and acidic residues. 4 disordered regions span residues methionine 1–leucine 38, lysine 83–histidine 105, valine 120–glutamine 625, and leucine 637–alanine 666. The stretch at glutamate 61 to proline 86 is one RPEL 1 repeat. Composition is skewed to basic and acidic residues over residues proline 138–glycine 153, histidine 184–tryptophan 221, and serine 229–aspartate 241. 2 stretches are compositionally biased toward low complexity: residues serine 296–serine 307 and serine 316–serine 333. Composition is skewed to pro residues over residues lysine 348–proline 357, lysine 381–arginine 390, leucine 427–proline 445, and tyrosine 460–aspartate 478. Acidic residues-rich tracts occupy residues aspartate 483 to proline 503, serine 541 to serine 557, and aspartate 566 to serine 576. The segment covering glutamine 605–histidine 615 has biased composition (basic and acidic residues). RPEL repeat units lie at residues threonine 635–asparagine 660 and arginine 673–glutamate 698. The residue at position 642 (serine 642) is a Phosphoserine.

It belongs to the phosphatase and actin regulator family. Binds ppp1ca and actin.

It localises to the cytoplasm. The protein localises to the cell projection. The protein resides in the lamellipodium. Its function is as follows. Regulator of protein phosphatase 1 (PP1) required for neural tube and optic fissure closure, and enteric neural crest cell (ENCCs) migration during development. Acts as an activator of PP1. During neural tube closure, localizes to the ventral neural tube and activates PP1, leading to down-regulate cell proliferation within cranial neural tissue and the neural retina. Also acts as a regulator of migration of enteric neural crest cells (ENCCs) by activating PP1, leading to repression of the integrin signaling through the rho/rock pathway. This is Phosphatase and actin regulator 4B (phactr4b) from Danio rerio (Zebrafish).